A 318-amino-acid chain; its full sequence is Aspartate carbamoyltransferase catalytic subunit (318 aa).

Carbamoyl phosphate contacts are provided by Arg66 and Thr67. Position 94 (Lys94) interacts with L-aspartate. Arg116, His144, and Gln147 together coordinate carbamoyl phosphate. 2 residues coordinate L-aspartate: Arg177 and Arg231. 2 residues coordinate carbamoyl phosphate: Gly272 and Pro273.

Belongs to the aspartate/ornithine carbamoyltransferase superfamily. ATCase family. In terms of assembly, heterododecamer (2C3:3R2) of six catalytic PyrB chains organized as two trimers (C3), and six regulatory PyrI chains organized as three dimers (R2).

It catalyses the reaction carbamoyl phosphate + L-aspartate = N-carbamoyl-L-aspartate + phosphate + H(+). It functions in the pathway pyrimidine metabolism; UMP biosynthesis via de novo pathway; (S)-dihydroorotate from bicarbonate: step 2/3. Catalyzes the condensation of carbamoyl phosphate and aspartate to form carbamoyl aspartate and inorganic phosphate, the committed step in the de novo pyrimidine nucleotide biosynthesis pathway. This is Aspartate carbamoyltransferase catalytic subunit from Frankia casuarinae (strain DSM 45818 / CECT 9043 / HFP020203 / CcI3).